The primary structure comprises 185 residues: Elongation factor P (185 aa).

Belongs to the elongation factor P family.

It localises to the cytoplasm. Its pathway is protein biosynthesis; polypeptide chain elongation. Functionally, involved in peptide bond synthesis. Stimulates efficient translation and peptide-bond synthesis on native or reconstituted 70S ribosomes in vitro. Probably functions indirectly by altering the affinity of the ribosome for aminoacyl-tRNA, thus increasing their reactivity as acceptors for peptidyl transferase. The polypeptide is Elongation factor P (Staphylococcus saprophyticus subsp. saprophyticus (strain ATCC 15305 / DSM 20229 / NCIMB 8711 / NCTC 7292 / S-41)).